Here is a 193-residue protein sequence, read N- to C-terminus: Fe/S biogenesis protein NfuA (193 aa).

Residues cysteine 150 and cysteine 153 each contribute to the [4Fe-4S] cluster site.

This sequence belongs to the NfuA family. Homodimer. [4Fe-4S] cluster serves as cofactor.

Functionally, involved in iron-sulfur cluster biogenesis. Binds a 4Fe-4S cluster, can transfer this cluster to apoproteins, and thereby intervenes in the maturation of Fe/S proteins. Could also act as a scaffold/chaperone for damaged Fe/S proteins. The polypeptide is Fe/S biogenesis protein NfuA (Histophilus somni (strain 129Pt) (Haemophilus somnus)).